A 314-amino-acid chain; its full sequence is Endolytic peptidoglycan transglycosylase RlpA (314 aa).

The N-terminal stretch at 1–19 (MGWALKKVCFLGVIFLISA) is a signal peptide. A lipid anchor (N-palmitoyl cysteine) is attached at Cys20. Cys20 carries the S-diacylglycerol cysteine lipid modification. The SPOR domain maps to 241–314 (SVSGGKFSLQ…YNQNAVLTRE (74 aa)).

It belongs to the RlpA family.

It localises to the cell membrane. Lytic transglycosylase with a strong preference for naked glycan strands that lack stem peptides. The sequence is that of Endolytic peptidoglycan transglycosylase RlpA from Helicobacter pylori (strain J99 / ATCC 700824) (Campylobacter pylori J99).